Reading from the N-terminus, the 487-residue chain is CUGBP Elav-like family member 1 (487 aa).

N-acetylmethionine is present on methionine 1. At threonine 4 the chain carries Phosphothreonine. RRM domains follow at residues 16 to 99 (IKMF…PADS) and 108 to 188 (RKLF…FADT). Lysine 109 is covalently cross-linked (Glycyl lysine isopeptide (Lys-Gly) (interchain with G-Cter in SUMO2)). Phosphoserine is present on residues serine 179 and serine 303. The interval 277-310 (TPSGTNALTTSSSPLSVLTSSAGSSPSSSSSNSV) is disordered. Positions 283–310 (ALTTSSSPLSVLTSSAGSSPSSSSSNSV) are enriched in low complexity. The RRM 3 domain maps to 402-480 (ANLFIYHLPQ…KRLKVQLKRS (79 aa)).

Belongs to the CELF/BRUNOL family. Interacts with HNRNPH1; the interaction in RNA-dependent. Interacts with PARN. Component of an EIF2 complex at least composed of CELF1/CUGBP1, CALR, CALR3, EIF2S1, EIF2S2, HSP90B1 and HSPA5. Associates with polysomes.

The protein resides in the nucleus. The protein localises to the cytoplasm. In terms of biological role, RNA-binding protein implicated in the regulation of several post-transcriptional events. Involved in pre-mRNA alternative splicing, mRNA translation and stability. Mediates exon inclusion and/or exclusion in pre-mRNA that are subject to tissue-specific and developmentally regulated alternative splicing. Specifically activates exon 5 inclusion of cardiac isoforms of TNNT2 during heart remodeling at the juvenile to adult transition. Acts both as an activator and as a repressor of a pair of coregulated exons: promotes inclusion of the smooth muscle (SM) exon but exclusion of the non-muscle (NM) exon in actinin pre-mRNAs. Activates SM exon 5 inclusion by antagonizing the repressive effect of PTB. Promotes exclusion of exon 11 of the INSR pre-mRNA. Inhibits, together with HNRNPH1, insulin receptor (IR) pre-mRNA exon 11 inclusion in myoblast. Increases translation and controls the choice of translation initiation codon of CEBPB mRNA. Increases mRNA translation of CEBPB in aging liver. Increases translation of CDKN1A mRNA by antagonizing the repressive effect of CALR3. Mediates rapid cytoplasmic mRNA deadenylation. Recruits the deadenylase PARN to the poly(A) tail of EDEN-containing mRNAs to promote their deadenylation. Required for completion of spermatogenesis. Binds to (CUG)n triplet repeats in the 3'-UTR of transcripts such as DMPK and to Bruno response elements (BREs). Binds to muscle-specific splicing enhancer (MSE) intronic sites flanking the alternative exon 5 of TNNT2 pre-mRNA. Binds to AU-rich sequences (AREs or EDEN-like) localized in the 3'-UTR of JUN and FOS mRNAs. Binds to the IR RNA. Binds to the 5'-region of CDKN1A and CEBPB mRNAs. Binds with the 5'-region of CEBPB mRNA in aging liver. May be a specific regulator of miRNA biogenesis. Binds to primary microRNA pri-MIR140 and, with CELF2, negatively regulates the processing to mature miRNA. This Rattus norvegicus (Rat) protein is CUGBP Elav-like family member 1 (Celf1).